Consider the following 266-residue polypeptide: Trehalose-6-phosphate phosphatase (266 aa).

The active-site Nucleophile is aspartate 20. Mg(2+) is bound by residues aspartate 20, aspartate 22, and aspartate 198. 20-22 contributes to the substrate binding site; sequence DLD.

This sequence belongs to the trehalose phosphatase family. The cofactor is Mg(2+). It depends on Mn(2+) as a cofactor. Co(2+) serves as cofactor. Zn(2+) is required as a cofactor.

The enzyme catalyses alpha,alpha-trehalose 6-phosphate + H2O = alpha,alpha-trehalose + phosphate. It participates in glycan biosynthesis; trehalose biosynthesis. Its function is as follows. Removes the phosphate from trehalose 6-phosphate (Tre6P) to produce free trehalose. Also catalyzes the dephosphorylation of glucose-6-phosphate (Glu6P) and 2-deoxyglucose-6-phosphate (2dGlu6P). This Escherichia coli (strain K12) protein is Trehalose-6-phosphate phosphatase (otsB).